Reading from the N-terminus, the 396-residue chain is Immunoglobulin heavy constant gamma 4 (396 aa).

The interval Ala-1–Val-98 is CH1. Residues Ala-1 to Thr-347 are Extracellular-facing. 3 consecutive Ig-like domains span residues Pro-6 to Glu-99, Pro-118 to Ser-217, and Pro-226 to Ser-322. Cys-27 and Cys-83 form a disulfide bridge. Residues Glu-99–Pro-110 form a hinge region. The interval Ala-111–Lys-220 is CH2. 2 disulfides stabilise this stretch: Cys-141–Cys-201 and Cys-247–Cys-305. A glycan (N-linked (GlcNAc...) (complex) asparagine) is linked at Asn-177. The tract at residues Gly-221–Leu-327 is CH3. A helical membrane pass occupies residues Ile-348–Phe-368. Over Lys-369–Ala-396 the chain is Cytoplasmic.

In terms of assembly, immunoglobulins are composed of two identical heavy chains and two identical light chains; disulfide-linked. In terms of processing, glycosylation on Asn-177 is required for interaction with Fc receptors and ability to activate the complement pathway. Post-translationally, (Microbial infection) Deglycosylation on Asn-177 by S.pyogenes EndoS or Endos2 endoglucosidases prevents interaction between immunoglobulin-gamma (IgG) and Fc receptors, impairing ability to activate the complement pathway.

It is found in the secreted. The protein resides in the cell membrane. Its function is as follows. Constant region of immunoglobulin heavy chains. Immunoglobulins, also known as antibodies, are membrane-bound or secreted glycoproteins produced by B lymphocytes. In the recognition phase of humoral immunity, the membrane-bound immunoglobulins serve as receptors which, upon binding of a specific antigen, trigger the clonal expansion and differentiation of B lymphocytes into immunoglobulins-secreting plasma cells. Secreted immunoglobulins mediate the effector phase of humoral immunity, which results in the elimination of bound antigens. The antigen binding site is formed by the variable domain of one heavy chain, together with that of its associated light chain. Thus, each immunoglobulin has two antigen binding sites with remarkable affinity for a particular antigen. The variable domains are assembled by a process called V-(D)-J rearrangement and can then be subjected to somatic hypermutations which, after exposure to antigen and selection, allow affinity maturation for a particular antigen. The protein is Immunoglobulin heavy constant gamma 4 of Homo sapiens (Human).